The following is a 262-amino-acid chain: Ribose-5-phosphate isomerase A (262 aa).

Substrate is bound by residues 33–36 (TGST), 89–92 (DGAD), and 102–105 (KGGG). The Proton acceptor role is filled by glutamate 111. Lysine 129 is a binding site for substrate.

This sequence belongs to the ribose 5-phosphate isomerase family. As to quaternary structure, homodimer.

The enzyme catalyses aldehydo-D-ribose 5-phosphate = D-ribulose 5-phosphate. It functions in the pathway carbohydrate degradation; pentose phosphate pathway; D-ribose 5-phosphate from D-ribulose 5-phosphate (non-oxidative stage): step 1/1. Catalyzes the reversible conversion of ribose-5-phosphate to ribulose 5-phosphate. The sequence is that of Ribose-5-phosphate isomerase A from Cereibacter sphaeroides (strain ATCC 17029 / ATH 2.4.9) (Rhodobacter sphaeroides).